The primary structure comprises 688 residues: Glycine--tRNA ligase beta subunit (688 aa).

This sequence belongs to the class-II aminoacyl-tRNA synthetase family. Tetramer of two alpha and two beta subunits.

Its subcellular location is the cytoplasm. It catalyses the reaction tRNA(Gly) + glycine + ATP = glycyl-tRNA(Gly) + AMP + diphosphate. The protein is Glycine--tRNA ligase beta subunit of Vibrio parahaemolyticus serotype O3:K6 (strain RIMD 2210633).